The chain runs to 420 residues: MSTFNAPKGIPEYFPPESAAFLAVRETLADAARRAGYGYIELPLFEDTTLFARGVGESTDVVSKEMYTFADRGGRSVTLRPEGTAGVTRSVIENGLDRGQLPVKLYYSGAFFRYERPQAGRYRQLQQLGVEAIGVDDPALDAEVIAIADEGYRRLGLTGYRIELTSLGDETCRPSYRAKLQEFLRGLPLDEDTRKRAELNPLRVLDDKRPEVRELLADAPLMVDHLSVEAKEHYEQVKTHLSDLGVAFTENPRLVRGLDYYTKTTFEFVHDGLGAQSGIGGGGRYDGLMAELGGQELSGVGFGLGVDRTLLACQAEGLAVGDQARCDVYCVPLGEAAKRRLVTIAGGLRGAGVRADVAYGGKSLKGAMKGADRSGARFALVLGERDLEAGSAQLKDLASGEQRPVPLDDAVAAVREALQP.

Belongs to the class-II aminoacyl-tRNA synthetase family. Homodimer.

It is found in the cytoplasm. The enzyme catalyses tRNA(His) + L-histidine + ATP = L-histidyl-tRNA(His) + AMP + diphosphate + H(+). This is Histidine--tRNA ligase from Saccharopolyspora erythraea (strain ATCC 11635 / DSM 40517 / JCM 4748 / NBRC 13426 / NCIMB 8594 / NRRL 2338).